The primary structure comprises 1083 residues: Rho GTPase-activating protein 39 (1083 aa).

At Ser-2 the chain carries N-acetylserine. 2 WW domains span residues 25-58 (NTRLEWVEIIEPRTRERMYANLVTGECVWDPPAG) and 63-97 (RTSENQWWELFDPNTSRFYYYNASTQRTVWHRPQG). The segment at 110–154 (KQNTESPRASAESSPGRGSSVSREGSTSSSLEPEPDTEKAQELPA) is disordered. A compositionally biased stretch (low complexity) spans 117–141 (RASAESSPGRGSSVSREGSTSSSLE). At Ser-169 the chain carries Phosphoserine. The interval 226-369 (AAQGNGYAPD…NKQGPPSPCQ (144 aa)) is disordered. Polar residues predominate over residues 245-256 (PSGSQHSPSLQT). A compositionally biased stretch (basic and acidic residues) spans 268 to 280 (PERRPSPFLKRAE). Residues Ser-286, Ser-384, Ser-388, Ser-406, and Ser-407 each carry the phosphoserine modification. Disordered regions lie at residues 405–545 (GSSP…EAEG) and 570–599 (MKQRSSWDSQQDGSGYESDGALPLPMPGPV). Composition is skewed to polar residues over residues 474-488 (SWSSQQDTLSSTGYS) and 573-582 (RSSWDSQQDG). 4 positions are modified to phosphoserine: Ser-604, Ser-690, Ser-715, and Ser-726. The MyTH4 domain occupies 722-879 (WSSESIKKPM…PNVEEIRHAK (158 aa)). The region spanning 890 to 1078 (SALQEVMGMQ…VLIQHLDTSF (189 aa)) is the Rho-GAP domain.

It is found in the nucleus. This is Rho GTPase-activating protein 39 (ARHGAP39) from Homo sapiens (Human).